A 418-amino-acid polypeptide reads, in one-letter code: Centromere protein U (418 aa).

Residues 1-11 are compositionally biased toward basic residues; sequence MAPRGRRRPRP. The disordered stretch occupies residues 1–76; the sequence is MAPRGRRRPR…TYETFDPPLH (76 aa). Residues 6–23 carry the Nuclear localization signal motif; the sequence is RRRPRPHRSEGARRSKNT. A compositionally biased stretch (basic and acidic residues) spans 12–42; that stretch reads HRSEGARRSKNTLERTHSMKDKAGQKCKPID. Threonine 78 carries the phosphothreonine; by PLK1 modification. Residues 88–227 form a disordered region; sequence SKHCGLSLSS…KRKKSRSKAI (140 aa). Threonine 98 is subject to Phosphothreonine. At serine 108 the chain carries Phosphoserine. Threonine 110 carries the post-translational modification Phosphothreonine. Phosphoserine is present on residues serine 111, serine 116, and serine 120. Residues 124 to 133 show a composition bias toward basic residues; it reads SAKKPGRKLR. A phosphoserine mark is found at serine 136, serine 139, and serine 141. The span at 145–165 shows a compositional bias: basic and acidic residues; the sequence is SDTRRKVKSAEKISTQRHEVI. Positions 180 to 193 are enriched in polar residues; the sequence is SVTSKKTGPLSAQP. Residue lysine 185 forms a Glycyl lysine isopeptide (Lys-Gly) (interchain with G-Cter in SUMO2) linkage. Phosphoserine is present on residues serine 190 and serine 194. Residues 208–224 show a composition bias toward basic residues; that stretch reads TQKKGKISHDKRKKSRS. At serine 232 the chain carries Phosphoserine. Coiled coils occupy residues 297–356 and 397–417; these read QMLT…NAAY and LLGAESHLRNINHQLEKLLDQ. The short motif at 303–320 is the Nuclear localization signal element; sequence KRKNAKMISDIEKKRQRM.

The protein belongs to the CENP-U/AME1 family. Component of the CENPA-NAC complex, at least composed of CENPA, CENPC, CENPH, CENPM, CENPN, CENPT and CENPU. The CENPA-NAC complex interacts with the CENPA-CAD complex, composed of CENPI, CENPK, CENPL, CENPO, CENPP, CENPQ, CENPR and CENPS. Interacts with MLF1. Interacts with PLK1. As to quaternary structure, (Microbial infection) Interacts with the N-terminal domain of Kaposi's sarcoma-associated herpesvirus latent nuclear antigen (LNA). Post-translationally, phosphorylated by PLK1 at Thr-78, creating a self-tethering site that specifically interacts with the polo-box domain of PLK1. Expressed at high levels in the testis, fetal liver, thymus, bone marrow and at lower levels in the lymph nodes, placenta, colon and spleen. Present in all cell lines examined, including B-cells, T-cells, epithelial cells and fibroblast cells. Expressed at high levels in glioblastoma cell lines.

Its subcellular location is the cytoplasm. It localises to the nucleus. The protein resides in the chromosome. The protein localises to the centromere. It is found in the kinetochore. In terms of biological role, component of the CENPA-NAC (nucleosome-associated) complex, a complex that plays a central role in assembly of kinetochore proteins, mitotic progression and chromosome segregation. The CENPA-NAC complex recruits the CENPA-CAD (nucleosome distal) complex and may be involved in incorporation of newly synthesized CENPA into centromeres. Plays an important role in the correct PLK1 localization to the mitotic kinetochores. A scaffold protein responsible for the initial recruitment and maintenance of the kinetochore PLK1 population until its degradation. Involved in transcriptional repression. The chain is Centromere protein U (CENPU) from Homo sapiens (Human).